The following is a 243-amino-acid chain: Trypsin (243 aa).

The N-terminal stretch at 1-15 is a signal peptide; the sequence is MKFLLLCVLLGAAAA. The propeptide at 16 to 20 is activation peptide; that stretch reads FDDDK. Positions 21–241 constitute a Peptidase S1 domain; sequence IIGGATCAKS…YNAWIQNTIA (221 aa). 6 disulfide bridges follow: Cys27–Cys157, Cys45–Cys61, Cys129–Cys230, Cys136–Cys203, Cys168–Cys182, and Cys193–Cys217. His60 (charge relay system) is an active-site residue. Glu72, Asn74, and Glu82 together coordinate Ca(2+). Residue Asp104 is the Charge relay system of the active site. Ser197 (charge relay system) is an active-site residue.

It belongs to the peptidase S1 family. Ca(2+) serves as cofactor.

The protein resides in the secreted. The protein localises to the extracellular space. The catalysed reaction is Preferential cleavage: Arg-|-Xaa, Lys-|-Xaa.. The chain is Trypsin from Xenopus laevis (African clawed frog).